The chain runs to 155 residues: Ribosome maturation factor RimP (155 aa).

This sequence belongs to the RimP family.

It is found in the cytoplasm. Functionally, required for maturation of 30S ribosomal subunits. This Synechococcus sp. (strain CC9902) protein is Ribosome maturation factor RimP.